A 188-amino-acid chain; its full sequence is Protein-arginine kinase activator protein (188 aa).

Short sequence motifs (CXXC metal binding motif) lie at residues 3–6, 29–32, 87–90, and 105–108; these read CENC, CQTC, CPSC, and CANC. In terms of domain architecture, UVR spans 145–180; it reads KRKIEEKNEYLKKLIEIQDFEEAAIVRDEIKALKAE.

Interacts with McsB and CtsR; the CXXC motifs are needed for the binding.

In terms of biological role, activates the phosphorylation activity of the protein-arginine kinase McsB. May function as an important molecule for oxidative tolerance in various types of stress including that of heavy metals. Binds to Cu(2+), Zn(2+), Co(2+) and Cd(2+) via its CXXC metal binding motifs. This Staphylococcus aureus (strain NCTC 8325 / PS 47) protein is Protein-arginine kinase activator protein.